The chain runs to 231 residues: Cutinase 2 (231 aa).

The first 16 residues, 1-16 (MKFFALTTLLAATASA), serve as a signal peptide directing secretion. Cysteines 48 and 126 form a disulfide. Catalysis depends on Ser-137, which acts as the Nucleophile. Cys-188 and Cys-195 are oxidised to a cystine. Residue Asp-192 is part of the active site. Catalysis depends on His-205, which acts as the Proton donor/acceptor.

It belongs to the cutinase family. Post-translationally, the 2 disulfide bonds play a critical role in holding the catalytic residues in juxta-position; reduction of the disulfide bridges results in the complete inactivation of the enzyme.

The protein resides in the secreted. The catalysed reaction is cutin + H2O = cutin monomers.. Its function is as follows. Catalyzes the hydrolysis of complex carboxylic polyesters found in the cell wall of plants. Degrades cutin, a macromolecule that forms the structure of the plant cuticle. Allows pathogenic fungi to penetrate through the cuticular barrier into the host plant during the initial stage of fungal infection. This chain is Cutinase 2 (CUT2), found in Fusarium vanettenii (Neocosmospora pisi).